The chain runs to 718 residues: Quinohemoprotein alcohol dehydrogenase ADH-IIG (718 aa).

The signal sequence occupies residues 1–29; the sequence is MRQTGLASLPLKSLAVAVLLSLAGTPALA. Glu-92 serves as a coordination point for pyrroloquinoline quinone. A disulfide bridge links Cys-138 with Cys-139. Residues Arg-144, Thr-189, and 205 to 206 each bind pyrroloquinoline quinone; that span reads GA. Residue Glu-207 participates in Ca(2+) binding. Thr-264 contacts pyrroloquinoline quinone. Residues Asn-284 and Asp-329 each contribute to the Ca(2+) site. Asp-329 acts as the Proton acceptor in catalysis. Lys-356 provides a ligand contact to pyrroloquinoline quinone. Trp-415 is a binding site for substrate. Residues 419-420 and Ala-571 each bind pyrroloquinoline quinone; that span reads DW. Residues 622-699 enclose the Cytochrome c domain; sequence ASIEAGAKLY…QIHQYLIKRA (78 aa). Positions 635, 638, 639, and 676 each coordinate heme c.

The protein belongs to the bacterial PQQ dehydrogenase family. In terms of assembly, monomer. Requires pyrroloquinoline quinone as cofactor. The cofactor is Ca(2+). Heme c serves as cofactor.

Its subcellular location is the periplasm. The enzyme catalyses 2 oxidized [azurin] + a primary alcohol = 2 reduced [azurin] + an aldehyde + 2 H(+). Its activity is regulated as follows. Exhibits higher affinity for 1-butanol compared to 1,2-propanediol but inhibited by 10 mM 1-butanol. In terms of biological role, catalyzes the dye-linked oxidation of primary alcohols to the corresponding aldehydes and the (subsequent) oxidation of the aldehydes to carboxylic acids. Active with primary alcohols, glycerol, 1,2-propanediol, 1,3-propanediol but not with methanol or sugar alcohols such as D-sorbitol. The sequence is that of Quinohemoprotein alcohol dehydrogenase ADH-IIG from Pseudomonas putida (Arthrobacter siderocapsulatus).